Consider the following 252-residue polypeptide: Low-density lipoprotein receptor-related protein 5-like protein (252 aa).

LDL-receptor class B repeat units follow at residues 3-45, 46-88, 89-132, 133-175, and 176-218; these read GHVY…NWVA, RSLY…HPEM, GLTY…DLQE, GKLY…LGDF, and IYWT…DKVV. The tract at residues 223-247 is disordered; it reads HADRNGGAATCASSRPTQPGLAAPS.

This Homo sapiens (Human) protein is Low-density lipoprotein receptor-related protein 5-like protein (LRP5L).